Here is a 232-residue protein sequence, read N- to C-terminus: Ribose-5-phosphate isomerase A (232 aa).

Residues 31 to 34, 87 to 90, and 100 to 103 each bind substrate; these read TGST, DGAD, and KGGG. Catalysis depends on Glu109, which acts as the Proton acceptor. Residue Lys127 participates in substrate binding.

The protein belongs to the ribose 5-phosphate isomerase family. Homodimer.

The enzyme catalyses aldehydo-D-ribose 5-phosphate = D-ribulose 5-phosphate. Its pathway is carbohydrate degradation; pentose phosphate pathway; D-ribose 5-phosphate from D-ribulose 5-phosphate (non-oxidative stage): step 1/1. Its function is as follows. Catalyzes the reversible conversion of ribose-5-phosphate to ribulose 5-phosphate. The sequence is that of Ribose-5-phosphate isomerase A from Bifidobacterium adolescentis (strain ATCC 15703 / DSM 20083 / NCTC 11814 / E194a).